A 362-amino-acid chain; its full sequence is Sulfate/thiosulfate import ATP-binding protein CysA (362 aa).

The ABC transporter domain maps to 3–237 (IEINNISKYF…PASRFVMEFL (235 aa)). 35–42 (GPSGSGKT) contributes to the ATP binding site.

The protein belongs to the ABC transporter superfamily. Sulfate/tungstate importer (TC 3.A.1.6) family. The complex is composed of two ATP-binding proteins (CysA), two transmembrane proteins (CysT and CysW) and a solute-binding protein (CysP).

The protein localises to the cell inner membrane. The enzyme catalyses sulfate(out) + ATP + H2O = sulfate(in) + ADP + phosphate + H(+). It carries out the reaction thiosulfate(out) + ATP + H2O = thiosulfate(in) + ADP + phosphate + H(+). Functionally, part of the ABC transporter complex CysAWTP involved in sulfate/thiosulfate import. Responsible for energy coupling to the transport system. This Photorhabdus laumondii subsp. laumondii (strain DSM 15139 / CIP 105565 / TT01) (Photorhabdus luminescens subsp. laumondii) protein is Sulfate/thiosulfate import ATP-binding protein CysA.